We begin with the raw amino-acid sequence, 295 residues long: Bifunctional protein FolD (295 aa).

NADP(+) is bound by residues 166 to 168, S191, and I232; that span reads GRS.

Belongs to the tetrahydrofolate dehydrogenase/cyclohydrolase family. Homodimer.

The catalysed reaction is (6R)-5,10-methylene-5,6,7,8-tetrahydrofolate + NADP(+) = (6R)-5,10-methenyltetrahydrofolate + NADPH. It carries out the reaction (6R)-5,10-methenyltetrahydrofolate + H2O = (6R)-10-formyltetrahydrofolate + H(+). It functions in the pathway one-carbon metabolism; tetrahydrofolate interconversion. Catalyzes the oxidation of 5,10-methylenetetrahydrofolate to 5,10-methenyltetrahydrofolate and then the hydrolysis of 5,10-methenyltetrahydrofolate to 10-formyltetrahydrofolate. This chain is Bifunctional protein FolD, found in Rhodopseudomonas palustris (strain BisB18).